The sequence spans 115 residues: Large ribosomal subunit protein bL20c (115 aa).

Belongs to the bacterial ribosomal protein bL20 family.

Its subcellular location is the plastid. It localises to the chloroplast. Functionally, binds directly to 23S ribosomal RNA and is necessary for the in vitro assembly process of the 50S ribosomal subunit. It is not involved in the protein synthesizing functions of that subunit. In Mesostigma viride (Green alga), this protein is Large ribosomal subunit protein bL20c (rpl20).